We begin with the raw amino-acid sequence, 650 residues long: DNA gyrase subunit B (650 aa).

The Toprim domain maps to 429–543 (NELFIVEGDS…AGYVYIAQPP (115 aa)). Mg(2+)-binding residues include Glu-435, Asp-508, and Asp-510.

Belongs to the type II topoisomerase GyrB family. In terms of assembly, heterotetramer, composed of two GyrA and two GyrB chains. In the heterotetramer, GyrA contains the active site tyrosine that forms a transient covalent intermediate with DNA, while GyrB binds cofactors and catalyzes ATP hydrolysis. Mg(2+) serves as cofactor. The cofactor is Mn(2+). It depends on Ca(2+) as a cofactor.

The protein localises to the cytoplasm. The catalysed reaction is ATP-dependent breakage, passage and rejoining of double-stranded DNA.. Functionally, a type II topoisomerase that negatively supercoils closed circular double-stranded (ds) DNA in an ATP-dependent manner to modulate DNA topology and maintain chromosomes in an underwound state. Negative supercoiling favors strand separation, and DNA replication, transcription, recombination and repair, all of which involve strand separation. Also able to catalyze the interconversion of other topological isomers of dsDNA rings, including catenanes and knotted rings. Type II topoisomerases break and join 2 DNA strands simultaneously in an ATP-dependent manner. The polypeptide is DNA gyrase subunit B (Streptococcus pyogenes serotype M1).